The sequence spans 158 residues: uncharacterized protein (158 aa).

Over residues 1 to 18 (MDLASEITSATQTSSLCS) the composition is skewed to polar residues. Disordered regions lie at residues 1–20 (MDLA…CSSG), 66–94 (LRDL…KPCL), and 111–158 (GSSG…GEEF). Low complexity predominate over residues 72–90 (RGSTSSSRSPSRPVSTSAS). Polar residues-rich tracts occupy residues 111–120 (GSSGHLQSPG) and 149–158 (LSHSAQGEEF).

This is an uncharacterized protein from Homo sapiens (Human).